The following is a 467-amino-acid chain: UDP-N-acetylmuramate--L-alanine ligase (467 aa).

An ATP-binding site is contributed by 112-118; that stretch reads GTHGKTT.

It belongs to the MurCDEF family.

The protein resides in the cytoplasm. It carries out the reaction UDP-N-acetyl-alpha-D-muramate + L-alanine + ATP = UDP-N-acetyl-alpha-D-muramoyl-L-alanine + ADP + phosphate + H(+). It functions in the pathway cell wall biogenesis; peptidoglycan biosynthesis. In terms of biological role, cell wall formation. The sequence is that of UDP-N-acetylmuramate--L-alanine ligase from Polaromonas sp. (strain JS666 / ATCC BAA-500).